Here is a 40-residue protein sequence, read N- to C-terminus: Ice-structuring protein GS-8 (40 aa).

Met-1 is subject to Blocked amino end (Met).

This sequence belongs to the type-I AFP family.

In terms of biological role, antifreeze proteins lower the blood freezing point. The polypeptide is Ice-structuring protein GS-8 (Myoxocephalus aenaeus (Grubby sculpin)).